Here is a 205-residue protein sequence, read N- to C-terminus: Guanylate kinase (205 aa).

The 179-residue stretch at 7–185 (GNIFIISAAS…AEEDLRHIVN (179 aa)) folds into the Guanylate kinase-like domain. Position 14–21 (14–21 (AASGTGKT)) interacts with ATP.

It belongs to the guanylate kinase family.

Its subcellular location is the cytoplasm. It carries out the reaction GMP + ATP = GDP + ADP. Its function is as follows. Essential for recycling GMP and indirectly, cGMP. This Neisseria meningitidis serogroup B (strain ATCC BAA-335 / MC58) protein is Guanylate kinase (gmk).